The following is a 290-amino-acid chain: Membrane protein insertase YidC 2 (290 aa).

Residues 1-19 form the signal peptide; that stretch reads MKKKALLPLFLGIMIFLAG. The N-palmitoyl cysteine moiety is linked to residue cysteine 20. Residue cysteine 20 is the site of S-diacylglycerol cysteine attachment. 5 consecutive transmembrane segments (helical) span residues 56–76, 134–154, 176–196, 211–231, and 232–252; these read FGLA…PFML, MLGC…YFVL, PDIW…VVSS, MVIS…ALGL, and YWSV…IYYS. The segment at 266–290 is disordered; it reads YEREHNPSSKKKGKNTQVVSKKNKK. Over residues 280 to 290 the composition is skewed to polar residues; it reads NTQVVSKKNKK.

It belongs to the OXA1/ALB3/YidC family. Type 2 subfamily.

The protein resides in the cell membrane. Its function is as follows. Required for the insertion and/or proper folding and/or complex formation of integral membrane proteins into the membrane. Involved in integration of membrane proteins that insert both dependently and independently of the Sec translocase complex, as well as at least some lipoproteins. The polypeptide is Membrane protein insertase YidC 2 (Staphylococcus epidermidis (strain ATCC 35984 / DSM 28319 / BCRC 17069 / CCUG 31568 / BM 3577 / RP62A)).